Here is a 149-residue protein sequence, read N- to C-terminus: Gonadotropin subunit beta-2 (149 aa).

The first 24 residues, 1–24 (MARIPECTILLLLCMCVLAVPAQC), serve as a signal peptide directing secretion. 6 cysteine pairs are disulfide-bonded: Cys30/Cys78, Cys44/Cys93, Cys47/Cys131, Cys55/Cys109, Cys59/Cys111, and Cys114/Cys121. Asn34 carries an N-linked (GlcNAc...) asparagine glycan.

This sequence belongs to the glycoprotein hormones subunit beta family. As to quaternary structure, heterodimer of an alpha and a beta chain.

It localises to the secreted. Functionally, involved in gametogenesis and steroidogenesis. This is Gonadotropin subunit beta-2 (cgbb) from Clupea pallasii (Pacific herring).